Reading from the N-terminus, the 514-residue chain is Serine--tRNA ligase, cytoplasmic (514 aa).

Position 1 is an N-acetylmethionine (Met-1). An interaction with tRNA region spans residues 9–61; sequence RVDKGGDPALIRETQEKRFKDPGLVDQLVKADSEWRRCRFRADNLNKLKNLCS. The residue at position 241 (Ser-241) is a Phosphoserine. Residues Thr-271 and Arg-302 each contribute to the L-serine site. ATP-binding positions include 302 to 304 and 318 to 321; these read RQE and VHQF. Lys-323 is subject to N6-acetyllysine. An L-serine-binding site is contributed by Glu-325. 391–394 is an ATP binding site; sequence ELVS. Asn-427 is an L-serine binding site. The interval 473–514 is disordered; sequence PAPIEQEPSKKQKKQHEGSKKKAAARDVTLENRLQNMEVTDA. Basic and acidic residues predominate over residues 479–502; sequence EPSKKQKKQHEGSKKKAAARDVTL. The Nuclear localization signal motif lies at 482–494; sequence KKQKKQHEGSKKK. Residues 504 to 514 show a composition bias toward polar residues; that stretch reads NRLQNMEVTDA.

It belongs to the class-II aminoacyl-tRNA synthetase family. Type-1 seryl-tRNA synthetase subfamily. In terms of assembly, homodimer. The tRNA molecule may bind across the dimer. Interacts with SIRT2. Interacts with METTL6; interaction is required for the tRNA N(3)-methylcytidine methyltransferase activity of METTL6. In terms of tissue distribution, brain.

The protein localises to the cytoplasm. It localises to the nucleus. It catalyses the reaction tRNA(Ser) + L-serine + ATP = L-seryl-tRNA(Ser) + AMP + diphosphate + H(+). The catalysed reaction is tRNA(Sec) + L-serine + ATP = L-seryl-tRNA(Sec) + AMP + diphosphate + H(+). The protein operates within aminoacyl-tRNA biosynthesis; selenocysteinyl-tRNA(Sec) biosynthesis; L-seryl-tRNA(Sec) from L-serine and tRNA(Sec): step 1/1. Catalyzes the attachment of serine to tRNA(Ser) in a two-step reaction: serine is first activated by ATP to form Ser-AMP and then transferred to the acceptor end of tRNA(Ser). Is probably also able to aminoacylate tRNA(Sec) with serine, to form the misacylated tRNA L-seryl-tRNA(Sec), which will be further converted into selenocysteinyl-tRNA(Sec). In the nucleus, binds to the VEGFA core promoter and prevents MYC binding and transcriptional activation by MYC. Recruits SIRT2 to the VEGFA promoter, promoting deacetylation of histone H4 at 'Lys-16' (H4K16). Thereby, inhibits the production of VEGFA and sprouting angiogenesis mediated by VEGFA. The sequence is that of Serine--tRNA ligase, cytoplasmic from Homo sapiens (Human).